A 1327-amino-acid polypeptide reads, in one-letter code: Vascular endothelial growth factor receptor 1 (1327 aa).

The signal sequence occupies residues 1-24; that stretch reads MPRQLLSGTVLLGAAFLLAGSTSG. The Extracellular segment spans residues 25-749; sequence SKLKVPVLSV…GTVERSNLEL (725 aa). Ig-like C2-type domains are found at residues 30–121, 120–222, 227–323, 331–417, 424–545, 552–644, and 651–737; these read PVLS…SIVY, VYVF…HRET, DIKL…TTVI, NLKR…LTVT, PQIY…RNVS, PSGF…KDVS, and PALL…AYVT. 5 N-linked (GlcNAc...) asparagine glycosylation sites follow: N48, N73, N82, N98, and N125. An intrachain disulfide couples C51 to C105. An intrachain disulfide couples C154 to C203. N-linked (GlcNAc...) asparagine glycosylation occurs at N247. Residues C248 and C307 are joined by a disulfide bond. N-linked (GlcNAc...) asparagine glycans are attached at residues N319, N383, N398, N409, N413, N470, N512, N543, N593, N615, and N663. A disulfide bond links C450 and C531. An intrachain disulfide couples C573 to C626. A disulfide bridge connects residues C672 and C721. Residues 750–770 form a helical membrane-spanning segment; that stretch reads ITLTCTCVAATLFWLLLTLFI. Topologically, residues 771–1327 are cytoplasmic; the sequence is RKLKRPYFSE…SVVHYSQPSI (557 aa). One can recognise a Protein kinase domain in the interval 819 to 1151; that stretch reads LKLGKSLGHG…ELVKRLGDLL (333 aa). Residues 825–833 and K853 contribute to the ATP site; that span reads LGHGAFGKV. The segment at 950 to 971 is disordered; the sequence is ASVTSSESFASSGFQEDKSLSD. Residues 951–961 show a composition bias toward low complexity; that stretch reads SVTSSESFASS. D1015 acts as the Proton acceptor in catalysis. Phosphotyrosine; by autocatalysis occurs at positions 1046, 1162, 1202, 1231, 1316, and 1322.

The protein belongs to the protein kinase superfamily. Tyr protein kinase family. CSF-1/PDGF receptor subfamily. In terms of assembly, interacts with VEGFA, VEGFB and PGF. Monomer in the absence of bound VEGFA, VEGFB or PGF. Homodimer in the presence of bound VEGFA, VEGFB and PGF. Post-translationally, autophosphorylated on tyrosine residues upon ligand binding.

Its subcellular location is the cell membrane. It localises to the endosome. The protein resides in the secreted. It carries out the reaction L-tyrosyl-[protein] + ATP = O-phospho-L-tyrosyl-[protein] + ADP + H(+). Present in an inactive conformation in the absence of bound ligand. Binding of VEGFA, VEGFB or PGF leads to dimerization and activation by autophosphorylation on tyrosine residues. Functionally, tyrosine-protein kinase that acts as a cell-surface receptor for VEGFA, VEGFB and PGF, and plays an essential role in the regulation of angiogenesis, cell survival, cell migration, macrophage function, and chemotaxis. Acts as a positive regulator of postnatal retinal hyaloid vessel regression. Has very high affinity for VEGFA and relatively low protein kinase activity; may function as a negative regulator of VEGFA signaling by limiting the amount of free VEGFA and preventing its binding to KDR. Ligand binding leads to the activation of several signaling cascades. Activation of PLCG1 leads to the production of the cellular signaling molecules diacylglycerol and inositol 1,4,5-trisphosphate and the activation of protein kinase C. Mediates phosphorylation of PIK3R1, the regulatory subunit of phosphatidylinositol 3-kinase, leading to activation of phosphatidylinositol kinase and the downstream signaling pathway. Mediates activation of MAPK1/ERK2, MAPK3/ERK1 and the MAP kinase signaling pathway, as well as of the AKT1 signaling pathway. Phosphorylates PLCG1. Promotes phosphorylation of AKT1 and CBL. The sequence is that of Vascular endothelial growth factor receptor 1 (FLT1) from Gallus gallus (Chicken).